A 117-amino-acid polypeptide reads, in one-letter code: Early E3 13.3 kDa protein (117 aa).

The polypeptide is Early E3 13.3 kDa protein (Canine adenovirus serotype 1 (strain Glaxo) (CAdV-1)).